The following is a 937-amino-acid chain: DNA mismatch repair protein msh-2 (937 aa).

659–666 is a binding site for ATP; that stretch reads GPNMGGKS.

The protein belongs to the DNA mismatch repair MutS family. In terms of assembly, heterodimer of msh2 and msh6.

Its subcellular location is the nucleus. Functionally, involved in post-replicative DNA-mismatch repair. Binds to mismatch-containing DNA. The sequence is that of DNA mismatch repair protein msh-2 (msh-2) from Neurospora crassa (strain ATCC 24698 / 74-OR23-1A / CBS 708.71 / DSM 1257 / FGSC 987).